A 63-amino-acid polypeptide reads, in one-letter code: Small, acid-soluble spore protein H 2 (63 aa).

This sequence belongs to the SspH family.

The protein resides in the spore core. In Clostridium botulinum (strain ATCC 19397 / Type A), this protein is Small, acid-soluble spore protein H 2.